The sequence spans 784 residues: MRRSLAPSQRGPMRPESRHSFTPPLLKKNKRSCQQELEREQELDRKRQSALRDASNTMDLPLPIRFTANSEYERAIAKVLARKFKVPMDNYVPDYGGKRVLGVRRCISRRPLHDPVACNALVLFNPPAYTEHERMGMDPTKVLVHVVVDPLLSNILRPHQREGVRFMYECVEGKRGNFNGCIMADEMGLGKTLQCVTLVWTLLRQGPECKPTINKAIVVSPSSLVKNWEKEFTKWLQGRLLCLPMEGGTKENTIRALEQFSMTSSRLGTPVLLISYETFRIYAEILCKYEVGMVICDEGHRLKNSDNLTYQALMGLKTKRRVLLSGTPIQNDLTEYYSLVNFVNPEMLGTAAVFKRNFESAILRGQNTDSTEGERQRAIEKTQELIGLVDQCIIRRTNQILTKYLPVKFEMVICAKLTSIQLELYTNFLKSDQVRRSLADCNEKASLTALADITTLKKICSHPDLIYEKITAREKGFENSQNVLPSNYNTKDLNPELSGKFMLLDFMLAAIRADGNDKVVLISNYTQTLDLFEQLARKRKYGFVRLDGTMSIKKRSKVVDRFNDPESDSFLFMLSSKAGGCGLNLIGANRLFMFDPDWNPANDEQAMARVWRDGQKKPCYIYRMVASGSIEEKILQRQTHKKSLSSTIIDNNESAEKHFTRDDLKDLFTFDADILSDTHEKLKCKRCVQNVQVKPPPDNTDCTSHLSQWYHCSNNRGLPDNILAQAWTDCKCVSFVFHHRSQAQEIVAIAEEAASEQPEEKPDRRKRPSTPPSDDSADEDFLGF.

Positions 1-54 (MRRSLAPSQRGPMRPESRHSFTPPLLKKNKRSCQQELEREQELDRKRQSALRDA) are disordered. Residues 2–9 (RRSLAPSQ) form a required for chromatin remodeling, strand pairing activities and coupling of ATPase activity region. S20 is modified (phosphoserine). Residue T22 is modified to Phosphothreonine. The segment covering 36–47 (ELEREQELDRKR) has biased composition (basic and acidic residues). The Helicase ATP-binding domain occupies 172-346 (EGKRGNFNGC…YSLVNFVNPE (175 aa)). Residue 185–192 (DEMGLGKT) coordinates ATP. A DEGH box motif is present at residues 297-300 (DEGH). Positions 503 to 660 (LLDFMLAAIR…NNESAEKHFT (158 aa)) constitute a Helicase C-terminal domain. The tract at residues 751 to 784 (EEAASEQPEEKPDRRKRPSTPPSDDSADEDFLGF) is disordered. Over residues 775-784 (DSADEDFLGF) the composition is skewed to acidic residues.

The protein belongs to the SNF2/RAD54 helicase family. Interacts (via N-terminus) with spn-A/Rad51.

The protein resides in the nucleus. Functionally, involved in mitotic DNA repair and meiotic recombination. Functions in the recombinational DNA repair pathway. Essential for interhomolog gene conversion (GC), but may have a less important role in intersister GC than spn-A/Rad51. In the presence of DNA, spn-A/Rad51 enhances the ATPase activity of okr/Rad54. This Drosophila yakuba (Fruit fly) protein is DNA repair and recombination protein RAD54-like.